The sequence spans 117 residues: Ubiquitin-like protein 3 (117 aa).

The 79-residue stretch at 10–88 (INLRLILVSG…PFGKTTVMHL (79 aa)) folds into the Ubiquitin-like domain. The S-palmitoyl cysteine moiety is linked to residue Cys113. The residue at position 114 (Cys114) is a Cysteine methyl ester. Cys114 carries S-geranylgeranyl cysteine lipidation. Positions 115-117 (VIL) are cleaved as a propeptide — removed in mature form.

It is found in the cell membrane. The protein is Ubiquitin-like protein 3 (UBL3) of Bos taurus (Bovine).